The following is a 399-amino-acid chain: Beta sliding clamp (399 aa).

Belongs to the beta sliding clamp family. Forms a ring-shaped head-to-tail homodimer around DNA which binds and tethers DNA polymerases and other proteins to the DNA. The DNA replisome complex has a single clamp-loading complex (3 tau and 1 each of delta, delta', psi and chi subunits) which binds 3 Pol III cores (1 core on the leading strand and 2 on the lagging strand) each with a beta sliding clamp dimer. Additional proteins in the replisome are other copies of gamma, psi and chi, Ssb, DNA helicase and RNA primase.

Its subcellular location is the cytoplasm. In terms of biological role, confers DNA tethering and processivity to DNA polymerases and other proteins. Acts as a clamp, forming a ring around DNA (a reaction catalyzed by the clamp-loading complex) which diffuses in an ATP-independent manner freely and bidirectionally along dsDNA. Initially characterized for its ability to contact the catalytic subunit of DNA polymerase III (Pol III), a complex, multichain enzyme responsible for most of the replicative synthesis in bacteria; Pol III exhibits 3'-5' exonuclease proofreading activity. The beta chain is required for initiation of replication as well as for processivity of DNA replication. The sequence is that of Beta sliding clamp (dnaN) from Mycolicibacterium paratuberculosis (strain ATCC BAA-968 / K-10) (Mycobacterium paratuberculosis).